The primary structure comprises 174 residues: Peptide deformylase (174 aa).

The Fe cation site is built by cysteine 91 and histidine 133. Residue glutamate 134 is part of the active site. Histidine 137 contacts Fe cation.

This sequence belongs to the polypeptide deformylase family. The cofactor is Fe(2+).

The catalysed reaction is N-terminal N-formyl-L-methionyl-[peptide] + H2O = N-terminal L-methionyl-[peptide] + formate. Its function is as follows. Removes the formyl group from the N-terminal Met of newly synthesized proteins. Requires at least a dipeptide for an efficient rate of reaction. N-terminal L-methionine is a prerequisite for activity but the enzyme has broad specificity at other positions. This is Peptide deformylase from Fusobacterium nucleatum subsp. nucleatum (strain ATCC 25586 / DSM 15643 / BCRC 10681 / CIP 101130 / JCM 8532 / KCTC 2640 / LMG 13131 / VPI 4355).